A 268-amino-acid polypeptide reads, in one-letter code: Small ribosomal subunit protein uS10m (268 aa).

Residues 1–64 (MIIRPVVRSL…RITTTTEAPK (64 aa)) constitute a mitochondrion transit peptide.

Belongs to the universal ribosomal protein uS10 family. As to quaternary structure, component of the mitochondrial small ribosomal subunit (mt-SSU). Mature N.crassa 74S mitochondrial ribosomes consist of a small (37S) and a large (54S) subunit. The 37S small subunit contains a 16S ribosomal RNA (16S mt-rRNA) and 32 different proteins. The 54S large subunit contains a 23S rRNA (23S mt-rRNA) and 42 different proteins.

The protein resides in the mitochondrion. In terms of biological role, component of the mitochondrial ribosome (mitoribosome), a dedicated translation machinery responsible for the synthesis of mitochondrial genome-encoded proteins, including at least some of the essential transmembrane subunits of the mitochondrial respiratory chain. The mitoribosomes are attached to the mitochondrial inner membrane and translation products are cotranslationally integrated into the membrane. The protein is Small ribosomal subunit protein uS10m (mrp-10) of Neurospora crassa (strain ATCC 24698 / 74-OR23-1A / CBS 708.71 / DSM 1257 / FGSC 987).